The sequence spans 339 residues: UDP-glucose 4-epimerase (339 aa).

Residues 12 to 13 (FI), 32 to 37 (DNLCNS), 59 to 60 (DI), 81 to 85 (FAGLK), N100, S125, Y150, K154, and F179 contribute to the NAD(+) site. Residues S125 and Y150 each coordinate substrate. Catalysis depends on Y150, which acts as the Proton acceptor. Substrate is bound by residues N180, 200–201 (NL), 217–219 (AVF), R232, and 293–296 (RAGD).

This sequence belongs to the NAD(P)-dependent epimerase/dehydratase family. Homodimer. The cofactor is NAD(+).

The enzyme catalyses UDP-alpha-D-glucose = UDP-alpha-D-galactose. Its pathway is carbohydrate metabolism; galactose metabolism. Involved in the metabolism of galactose. Plays an essential role in the incorporation of galactose into meningococcal lipopolysaccharide surface molecules, which are important for pathogenesis. Catalyzes the conversion of UDP-galactose (UDP-Gal) to UDP-glucose (UDP-Glc) through a mechanism involving the transient reduction of NAD. The chain is UDP-glucose 4-epimerase (galE) from Neisseria meningitidis serogroup B (strain ATCC BAA-335 / MC58).